The primary structure comprises 331 residues: Gamma-parvin (331 aa).

Met1 is modified (N-acetylmethionine). Residues Glu17–Lys39 form a disordered region. 2 Calponin-homology (CH) domains span residues Glu44–Gln151 and Asn210–Thr317.

Belongs to the parvin family. As to quaternary structure, interacts with ILK; the interaction promotes the establishment of cell polarity required for leukocyte migration. Interacts with ARHGEF6; the guanine nucleotide exchange factor activity of ARHGEF6 is essential for the PARVG-induced enhancement of cell spreading. As to expression, expressed predominantly in lymphoid organs, including spleen, thymus, lymph node, bone marrow and peripheral blood leukocytes and moderately in the digestive tract, including stomach, duodenum, jejunum, ileum, ileocecum and appendix, as well as in lung and liver. Also expressed in tumors, but at a lower level than in the corresponding normal tissues.

Its subcellular location is the cell junction. The protein localises to the focal adhesion. The protein resides in the cell membrane. It is found in the cytoplasm. It localises to the cytoskeleton. Functionally, plays a role with ILK in promoting the cell adhesion and spreading of leukocytes. The sequence is that of Gamma-parvin (PARVG) from Homo sapiens (Human).